Reading from the N-terminus, the 311-residue chain is tRNA-cytidine(32) 2-sulfurtransferase (311 aa).

The tract at residues 18-38 is disordered; that stretch reads KVGADHGPSEENGSSHPLFDN. The PP-loop motif signature appears at 77–82; sequence SGGKDS. The [4Fe-4S] cluster site is built by C152, C155, and C243.

It belongs to the TtcA family. As to quaternary structure, homodimer. It depends on Mg(2+) as a cofactor. Requires [4Fe-4S] cluster as cofactor.

It is found in the cytoplasm. It catalyses the reaction cytidine(32) in tRNA + S-sulfanyl-L-cysteinyl-[cysteine desulfurase] + AH2 + ATP = 2-thiocytidine(32) in tRNA + L-cysteinyl-[cysteine desulfurase] + A + AMP + diphosphate + H(+). Its pathway is tRNA modification. Functionally, catalyzes the ATP-dependent 2-thiolation of cytidine in position 32 of tRNA, to form 2-thiocytidine (s(2)C32). The sulfur atoms are provided by the cysteine/cysteine desulfurase (IscS) system. This chain is tRNA-cytidine(32) 2-sulfurtransferase, found in Agrobacterium fabrum (strain C58 / ATCC 33970) (Agrobacterium tumefaciens (strain C58)).